A 175-amino-acid chain; its full sequence is Alkyl hydroperoxide reductase AhpD (175 aa).

C130 acts as the Proton donor in catalysis. A disulfide bridge links C130 with C133. The active-site Cysteine sulfenic acid (-SOH) intermediate is C133.

This sequence belongs to the AhpD family. As to quaternary structure, homotrimer.

The enzyme catalyses N(6)-[(R)-dihydrolipoyl]-L-lysyl-[lipoyl-carrier protein] + a hydroperoxide = N(6)-[(R)-lipoyl]-L-lysyl-[lipoyl-carrier protein] + an alcohol + H2O. Its function is as follows. Antioxidant protein with alkyl hydroperoxidase activity. Required for the reduction of the AhpC active site cysteine residues and for the regeneration of the AhpC enzyme activity. This Mycobacteroides abscessus (strain ATCC 19977 / DSM 44196 / CCUG 20993 / CIP 104536 / JCM 13569 / NCTC 13031 / TMC 1543 / L948) (Mycobacterium abscessus) protein is Alkyl hydroperoxide reductase AhpD.